The following is a 160-amino-acid chain: UPF0225 protein PputW619_1140 (160 aa).

This sequence belongs to the UPF0225 family.

This chain is UPF0225 protein PputW619_1140, found in Pseudomonas putida (strain W619).